A 246-amino-acid chain; its full sequence is Small ribosomal subunit protein uS3 (246 aa).

Residues 19–98 (IDEWLAQNFY…NPMLDARVQA (80 aa)) form the KH type-2 domain. A disordered region spans residues 218-246 (LQEETASTLREHMEAARPGEEHEEDREES). A compositionally biased stretch (basic and acidic residues) spans 226–237 (LREHMEAARPGE).

The protein belongs to the universal ribosomal protein uS3 family. In terms of assembly, part of the 30S ribosomal subunit.

In terms of biological role, binds the lower part of the 30S subunit head. This Aeropyrum pernix (strain ATCC 700893 / DSM 11879 / JCM 9820 / NBRC 100138 / K1) protein is Small ribosomal subunit protein uS3.